The primary structure comprises 503 residues: MTRARSYEIRTFGCQMNVHDSERLSGLLEDAGYVKAAPGATADLVVFNTCAVRENADNKLYGTLGHLAPVKAGRPGMQIAVGGCLAQKDRDTVVRKAPWVDVVFGTHNIGSLPVLLERARHNEQAQVEILESLEAFPSTLPAKRESAYAGWVSISVGCNNTCTFCIVPALRGKEVDRRPGDVLAEVQALVDQGVLEVTLLGQNVNSYGASFADPDEPRDRGAFAKLLRACGGIEGLERVRFTSPHPAEFTDDVIEAMAQTPNICPQLHMPLQSGSDRVLKAMRRSYRKARYLGIIEKVRAAMPHAAITTDIIVGFPGETEEDFQETLDVVRQARFTSAFTFQYSKRPGTPAAEMADQVPKQVVQERYDRLIALQEEISLAANRELIGTEVELLVAEGSGKKNAATARMSGRARDGRLVHFRPGGTAEPIRPGDLVTVDITEAAPHHLIADAPVKTHRRTRAGDAHERGITPKTAPIGVGLGLPRIGAPAPEPVAAGCSTGCGA.

An MTTase N-terminal domain is found at 5 to 121 (RSYEIRTFGC…LPVLLERARH (117 aa)). Cys14, Cys50, Cys84, Cys158, Cys162, and Cys165 together coordinate [4Fe-4S] cluster. The 237-residue stretch at 144–380 (RESAYAGWVS…IALQEEISLA (237 aa)) folds into the Radical SAM core domain. A TRAM domain is found at 383 to 453 (RELIGTEVEL…PHHLIADAPV (71 aa)).

The protein belongs to the methylthiotransferase family. MiaB subfamily. Monomer. [4Fe-4S] cluster serves as cofactor.

Its subcellular location is the cytoplasm. The enzyme catalyses N(6)-dimethylallyladenosine(37) in tRNA + (sulfur carrier)-SH + AH2 + 2 S-adenosyl-L-methionine = 2-methylsulfanyl-N(6)-dimethylallyladenosine(37) in tRNA + (sulfur carrier)-H + 5'-deoxyadenosine + L-methionine + A + S-adenosyl-L-homocysteine + 2 H(+). Its function is as follows. Catalyzes the methylthiolation of N6-(dimethylallyl)adenosine (i(6)A), leading to the formation of 2-methylthio-N6-(dimethylallyl)adenosine (ms(2)i(6)A) at position 37 in tRNAs that read codons beginning with uridine. This chain is tRNA-2-methylthio-N(6)-dimethylallyladenosine synthase, found in Nocardia farcinica (strain IFM 10152).